Here is a 404-residue protein sequence, read N- to C-terminus: Probable eukaryotic initiation factor 4A (404 aa).

Residues 1-28 are disordered; it reads MAQQGKVEPQDQDSFLDDQPGIRPIPSF. The Q motif motif lies at 26 to 54; sequence PSFDDMPLHQNLLRGIYSHGFEKPSSIQQ. The Helicase ATP-binding domain maps to 57–231; the sequence is IVPFTRGGDI…KKFMRDPTRI (175 aa). Residue 70-77 participates in ATP binding; the sequence is AQSGTGKT. The DEAD box signature appears at 179–182; it reads DEAD. Residues 242–402 enclose the Helicase C-terminal domain; sequence GIKQFFIAVE…ELPVDFAAYL (161 aa).

This sequence belongs to the DEAD box helicase family. eIF4A subfamily. In terms of assembly, eIF4F is a multi-subunit complex, the composition of which varies with external and internal environmental conditions. It is composed of at least EIF4A, EIF4E and EIF4G.

The catalysed reaction is ATP + H2O = ADP + phosphate + H(+). ATP-dependent RNA helicase which is a subunit of the eIF4F complex involved in cap recognition and is required for mRNA binding to ribosome. In the current model of translation initiation, eIF4A unwinds RNA secondary structures in the 5'-UTR of mRNAs which is necessary to allow efficient binding of the small ribosomal subunit, and subsequent scanning for the initiator codon. This Trypanosoma brucei brucei (strain 927/4 GUTat10.1) protein is Probable eukaryotic initiation factor 4A.